Reading from the N-terminus, the 488-residue chain is Glycogen synthase (488 aa).

ADP-alpha-D-glucose is bound at residue Lys-16.

This sequence belongs to the glycosyltransferase 1 family. Bacterial/plant glycogen synthase subfamily.

The enzyme catalyses [(1-&gt;4)-alpha-D-glucosyl](n) + ADP-alpha-D-glucose = [(1-&gt;4)-alpha-D-glucosyl](n+1) + ADP + H(+). It participates in glycan biosynthesis; glycogen biosynthesis. Functionally, synthesizes alpha-1,4-glucan chains using ADP-glucose. This chain is Glycogen synthase, found in Marinobacter nauticus (strain ATCC 700491 / DSM 11845 / VT8) (Marinobacter aquaeolei).